Reading from the N-terminus, the 594-residue chain is DEAD-box ATP-dependent RNA helicase 25 (594 aa).

2 disordered regions span residues 56-80 (RSGG…EEGL) and 92-121 (GVRE…VDGS). The Q motif motif lies at 126-154 (TRFDQCTISPLSLKAVKDAGYERMTQVQE). Residues 157–340 (LPVILQGKDV…HIAMKKNYKF (184 aa)) form the Helicase ATP-binding domain. Residue 170 to 177 (AKTGTGKT) coordinates ATP. Residues 288 to 291 (DEAD) carry the DEAD box motif. Residues 370 to 520 (ILYDVLKKHV…SVDSSTQTIV (151 aa)) form the Helicase C-terminal domain.

It belongs to the DEAD box helicase family.

The catalysed reaction is ATP + H2O = ADP + phosphate + H(+). In Oryza sativa subsp. japonica (Rice), this protein is DEAD-box ATP-dependent RNA helicase 25.